We begin with the raw amino-acid sequence, 347 residues long: NADH-ubiquinone oxidoreductase chain 2 (347 aa).

9 helical membrane passes run 1–21 (MNPFVSVIIYTTIILGTMIVM), 59–79 (YFMTQATASMLLMLAVIINLL), 93–115 (TASMIMTMALAMKLGLSPFHFWV), 149–169 (INPNLILTMSMLSILVGGWGG), 178–198 (IMAYSSIAHMGWMAAILIYNP), 201–221 (TILNLTIYLMTTFTMFTMFAL), 239–259 (IITTLMLTILLSMGGLPPLTG), 274–294 (DSIILPTLMAIMALLNLYFYM), and 325–345 (LLPTMIILSTMLLPLTPMLVV).

This sequence belongs to the complex I subunit 2 family. Core subunit of respiratory chain NADH dehydrogenase (Complex I) which is composed of 45 different subunits. Interacts with TMEM242.

Its subcellular location is the mitochondrion inner membrane. The enzyme catalyses a ubiquinone + NADH + 5 H(+)(in) = a ubiquinol + NAD(+) + 4 H(+)(out). In terms of biological role, core subunit of the mitochondrial membrane respiratory chain NADH dehydrogenase (Complex I) which catalyzes electron transfer from NADH through the respiratory chain, using ubiquinone as an electron acceptor. Essential for the catalytic activity and assembly of complex I. This is NADH-ubiquinone oxidoreductase chain 2 from Hippopotamus amphibius (Hippopotamus).